Here is a 66-residue protein sequence, read N- to C-terminus: Large ribosomal subunit protein uL29 (66 aa).

The protein belongs to the universal ribosomal protein uL29 family.

This Francisella philomiragia subsp. philomiragia (strain ATCC 25017 / CCUG 19701 / FSC 153 / O#319-036) protein is Large ribosomal subunit protein uL29.